A 588-amino-acid polypeptide reads, in one-letter code: Polyamine deacetylase HDAC10 (588 aa).

The interval 1–302 is histone deacetylase; it reads MGTALVYHED…AGGRICAVLE (302 aa). Histidine 135 is an active-site residue.

Belongs to the histone deacetylase family. HD type 2 subfamily. Interacts with HDAC3. Interacts with HDAC2 and NCOR2/SMRT. Interacts with HSPA8/HSC70. Interacts with MSH2.

The protein localises to the cytoplasm. Its subcellular location is the nucleus. The catalysed reaction is N(8)-acetylspermidine + H2O = spermidine + acetate. The enzyme catalyses N-acetylputrescine + H2O = putrescine + acetate. It carries out the reaction N-acetylcadaverine + H2O = cadaverine + acetate. It catalyses the reaction N(6)-acetyl-L-lysyl-[protein] + H2O = L-lysyl-[protein] + acetate. Functionally, polyamine deacetylase (PDAC), which acts preferentially on N(8)-acetylspermidine, and also on acetylcadaverine and acetylputrescine. Exhibits attenuated catalytic activity toward N(1),N(8)-diacetylspermidine and very low activity, if any, toward N(1)-acetylspermidine. Histone deacetylase activity has been observed in vitro. Has also been shown to be involved in MSH2 deacetylation. The physiological relevance of protein/histone deacetylase activity is unclear and could be very weak. May play a role in the promotion of late stages of autophagy, possibly autophagosome-lysosome fusion and/or lysosomal exocytosis in neuroblastoma cells. May play a role in homologous recombination. May promote DNA mismatch repair. The sequence is that of Polyamine deacetylase HDAC10 (Hdac10) from Rattus norvegicus (Rat).